Consider the following 103-residue polypeptide: Large ribosomal subunit protein bL21 (103 aa).

It belongs to the bacterial ribosomal protein bL21 family. Part of the 50S ribosomal subunit. Contacts protein L20.

This protein binds to 23S rRNA in the presence of protein L20. This Thioalkalivibrio sulfidiphilus (strain HL-EbGR7) protein is Large ribosomal subunit protein bL21.